Consider the following 216-residue polypeptide: Ribosomal RNA small subunit methyltransferase G (216 aa).

Residues Gly-83, Met-88, 134 to 135 (VE), and Arg-149 each bind S-adenosyl-L-methionine.

The protein belongs to the methyltransferase superfamily. RNA methyltransferase RsmG family.

Its subcellular location is the cytoplasm. It carries out the reaction guanosine(527) in 16S rRNA + S-adenosyl-L-methionine = N(7)-methylguanosine(527) in 16S rRNA + S-adenosyl-L-homocysteine. Its function is as follows. Specifically methylates the N7 position of guanine in position 527 of 16S rRNA. This is Ribosomal RNA small subunit methyltransferase G from Pseudomonas putida (strain ATCC 700007 / DSM 6899 / JCM 31910 / BCRC 17059 / LMG 24140 / F1).